Here is a 204-residue protein sequence, read N- to C-terminus: Large ribosomal subunit protein uL4 (204 aa).

Residues 49–90 are disordered; sequence KVKGMGEVSGTTKKPYRQKGTGSARQGSLRAPQYRTGGAVHG.

This sequence belongs to the universal ribosomal protein uL4 family. Part of the 50S ribosomal subunit.

In terms of biological role, one of the primary rRNA binding proteins, this protein initially binds near the 5'-end of the 23S rRNA. It is important during the early stages of 50S assembly. It makes multiple contacts with different domains of the 23S rRNA in the assembled 50S subunit and ribosome. Functionally, forms part of the polypeptide exit tunnel. The sequence is that of Large ribosomal subunit protein uL4 from Gluconacetobacter diazotrophicus (strain ATCC 49037 / DSM 5601 / CCUG 37298 / CIP 103539 / LMG 7603 / PAl5).